A 159-amino-acid polypeptide reads, in one-letter code: Putative pre-16S rRNA nuclease (159 aa).

This sequence belongs to the YqgF nuclease family.

It is found in the cytoplasm. Could be a nuclease involved in processing of the 5'-end of pre-16S rRNA. This chain is Putative pre-16S rRNA nuclease, found in Agrobacterium fabrum (strain C58 / ATCC 33970) (Agrobacterium tumefaciens (strain C58)).